The following is a 384-amino-acid chain: 8-amino-7-oxononanoate synthase (384 aa).

Position 21 (arginine 21) interacts with substrate. 108 to 109 (GF) contacts pyridoxal 5'-phosphate. Histidine 133 contacts substrate. The pyridoxal 5'-phosphate site is built by serine 179, histidine 207, and threonine 233. Position 236 is an N6-(pyridoxal phosphate)lysine (lysine 236). Threonine 352 is a binding site for substrate.

It belongs to the class-II pyridoxal-phosphate-dependent aminotransferase family. BioF subfamily. In terms of assembly, homodimer. Pyridoxal 5'-phosphate is required as a cofactor.

The catalysed reaction is 6-carboxyhexanoyl-[ACP] + L-alanine + H(+) = (8S)-8-amino-7-oxononanoate + holo-[ACP] + CO2. Its pathway is cofactor biosynthesis; biotin biosynthesis. In terms of biological role, catalyzes the decarboxylative condensation of pimeloyl-[acyl-carrier protein] and L-alanine to produce 8-amino-7-oxononanoate (AON), [acyl-carrier protein], and carbon dioxide. The sequence is that of 8-amino-7-oxononanoate synthase from Shigella boydii serotype 18 (strain CDC 3083-94 / BS512).